The sequence spans 346 residues: tRNA N6-adenosine threonylcarbamoyltransferase (346 aa).

Residues histidine 111 and histidine 115 each contribute to the Fe cation site. Residues leucine 134–glycine 138, aspartate 167, glycine 180, and asparagine 279 each bind substrate. Aspartate 307 lines the Fe cation pocket.

This sequence belongs to the KAE1 / TsaD family. Fe(2+) serves as cofactor.

It is found in the cytoplasm. It carries out the reaction L-threonylcarbamoyladenylate + adenosine(37) in tRNA = N(6)-L-threonylcarbamoyladenosine(37) in tRNA + AMP + H(+). In terms of biological role, required for the formation of a threonylcarbamoyl group on adenosine at position 37 (t(6)A37) in tRNAs that read codons beginning with adenine. Is involved in the transfer of the threonylcarbamoyl moiety of threonylcarbamoyl-AMP (TC-AMP) to the N6 group of A37, together with TsaE and TsaB. TsaD likely plays a direct catalytic role in this reaction. The chain is tRNA N6-adenosine threonylcarbamoyltransferase from Burkholderia ambifaria (strain ATCC BAA-244 / DSM 16087 / CCUG 44356 / LMG 19182 / AMMD) (Burkholderia cepacia (strain AMMD)).